We begin with the raw amino-acid sequence, 666 residues long: MQHVNHSSFDKASKAGFIIALGIVYGDIGTSPLYTMQSLVENQGGISSVTESFILGSISLIIWTLTLITTIKYVLVALKADNHHEGGIFSLYTLVRKMTPWLIVPAVIGGATLLSDGALTPAVTVTSAVEGLKVVPSLQHIFQNQSNVIFATLFILLLLFAIQRFGTGVIGKLFGPIMFIWFAFLGISGLLNSFAHPEVFKAINPYYGLKLLFSPENHKGIFILGSIFLATTGAEALYSDLGHVGRGNIHVSWPFVKVAIILSYCGQGAWILANKNAGNELNPFFASIPSQFTMHVVILATLAAIIASQALISGSFTLVSEAMRLKIFPQFRSTYPGDNIGQTYIPVINWFLFAITTSIVLLFKTSAHMEAAYGLAITITMLMTTILLSFFLIQKGVKRGLVLLMMIFFGILEGIFFLASAVKFMHGGYVVVIIAVAIIFIMIIWYKGSKIVSRYVKLLDLKDYIGQLDKLRHDHRYPIYHTNVVYLTNRMEGDMIDKSIMYSILDKRPKKAQVYWFVNIKVTDEPYTAEYKVDMMGTDFIVKVELYLGFKMRQTVSRYLRTIVEELLESGRLPKQGKTYSVRPDSKVGDFRFIVLDERFSSSQNLKPGERFVMLMKSSVKHWTATPIRWFGLQFSEVTTEVVPLIFTANRGLPIKEKIELTTTGD.

Transmembrane regions (helical) follow at residues 16–36 (GFII…LYTM), 58–78 (ISLI…LVAL), 99–119 (TPWL…DGAL), 141–161 (IFQN…LLFA), 167–187 (TGVI…FLGI), 221–241 (IFIL…YSDL), 253–273 (WPFV…WILA), 292–312 (FTMH…QALI), 343–363 (TYIP…VLLF), 373–393 (YGLA…FFLI), 402–422 (VLLM…ASAV), and 424–444 (FMHG…IMII).

It belongs to the HAK/KUP transporter (TC 2.A.72) family.

The protein localises to the cell membrane. It catalyses the reaction K(+)(in) + H(+)(in) = K(+)(out) + H(+)(out). In terms of biological role, transport of potassium into the cell. Likely operates as a K(+):H(+) symporter. The polypeptide is Probable potassium transport system protein Kup (Streptococcus agalactiae serotype III (strain NEM316)).